The following is a 645-amino-acid chain: ATP-dependent zinc metalloprotease FtsH (645 aa).

Topologically, residues 1–6 (MDQRPK) are cytoplasmic. A helical transmembrane segment spans residues 7-27 (FGMILFYIVLGVFLMVALRGL). Residues 28 to 110 (YTTDTNLSVP…VVYEKGNDSL (83 aa)) are Periplasmic-facing. A helical membrane pass occupies residues 111-131 (FWVNLLGTIIPLAIIVFIWFF). The Cytoplasmic portion of the chain corresponds to 132–645 (AMRSLSGRNS…AKEGNEDEKN (514 aa)). Residue 204–211 (GPPGTGKT) participates in ATP binding. Histidine 426 contacts Zn(2+). The active site involves glutamate 427. 2 residues coordinate Zn(2+): histidine 430 and aspartate 503. Residues 623-645 (SKRKVSAVSTNEEAKEGNEDEKN) form a disordered region. A compositionally biased stretch (basic and acidic residues) spans 634 to 645 (EEAKEGNEDEKN).

It in the central section; belongs to the AAA ATPase family. The protein in the C-terminal section; belongs to the peptidase M41 family. As to quaternary structure, homohexamer. Zn(2+) serves as cofactor.

It is found in the cell inner membrane. Acts as a processive, ATP-dependent zinc metallopeptidase for both cytoplasmic and membrane proteins. Plays a role in the quality control of integral membrane proteins. This chain is ATP-dependent zinc metalloprotease FtsH, found in Kosmotoga olearia (strain ATCC BAA-1733 / DSM 21960 / TBF 19.5.1).